A 156-amino-acid chain; its full sequence is Arginine repressor (156 aa).

Belongs to the ArgR family.

The protein localises to the cytoplasm. It functions in the pathway amino-acid biosynthesis; L-arginine biosynthesis [regulation]. Regulates arginine biosynthesis genes. The polypeptide is Arginine repressor (Enterobacter sp. (strain 638)).